The primary structure comprises 184 residues: MATGPRYTVPMRRRREARTNYHQRLRLLKSGKPRLVARKSNNQTKAQLVVTGPQGDETVASATSADLEAFGWEAPTGNLPAAYLTGLLAGKRAIEAGLDEAVLDIGLNTATPGNKVFAVQEGVIDAGLEVPHNEDVFADWQRTRGAHIAEYAEQLEDGLYSGDFDATELPDHFDEVRERVEDEL.

This sequence belongs to the universal ribosomal protein uL18 family. Part of the 50S ribosomal subunit. Contacts the 5S and 23S rRNAs.

Functionally, this is one of the proteins that bind and probably mediate the attachment of the 5S RNA into the large ribosomal subunit, where it forms part of the central protuberance. This chain is Large ribosomal subunit protein uL18, found in Natronomonas pharaonis (strain ATCC 35678 / DSM 2160 / CIP 103997 / JCM 8858 / NBRC 14720 / NCIMB 2260 / Gabara) (Halobacterium pharaonis).